The sequence spans 153 residues: Transcriptional repressor NrdR (153 aa).

A zinc finger lies at 3–34 (CPFCNHLHDKVVDSRESKEGDAIRRRRECLEC). The ATP-cone domain occupies 49–139 (YMVVKKDGRR…VYRDFQDEQA (91 aa)).

It belongs to the NrdR family. Zn(2+) serves as cofactor.

Negatively regulates transcription of bacterial ribonucleotide reductase nrd genes and operons by binding to NrdR-boxes. This Solibacter usitatus (strain Ellin6076) protein is Transcriptional repressor NrdR.